The following is a 458-amino-acid chain: Transcription factor Atf1 (458 aa).

The 64-residue stretch at 347–410 (EEKRRNFLER…VNLKTLLLAH (64 aa)) folds into the bZIP domain. Residues 349–378 (KRRNFLERNRVAALKCRQRKKQWLANLQNK) are basic motif. Residues 389–403 (LTATVTQLREEIVNL) are leucine-zipper.

It belongs to the bZIP family.

The protein resides in the nucleus. In terms of biological role, transcription factor that positively regulates vegetative growth, reproduction, and osmotic stress response. In Penicillium expansum (Blue mold rot fungus), this protein is Transcription factor Atf1.